The following is a 97-amino-acid chain: Venom peptide HsVx1 (97 aa).

A signal peptide spans Met-1–Gly-20.

The protein belongs to the scorpion La1-like peptide family. Post-translationally, contains 4 disulfide bonds. As to expression, expressed by the venom gland.

It localises to the secreted. In Heterometrus spinifer (Asia giant forest scorpion), this protein is Venom peptide HsVx1.